A 339-amino-acid chain; its full sequence is 2-deoxy-scyllo-inosamine dehydrogenase (339 aa).

Zn(2+) is bound by residues Cys37, His59, Cys88, Cys91, Cys94, Cys102, and Glu143.

The protein belongs to the zinc-containing alcohol dehydrogenase family. DOIA dehydrogenase subfamily. The cofactor is Zn(2+).

It catalyses the reaction 2-deoxy-scyllo-inosamine + NADP(+) = 3-amino-2,3-dideoxy-scyllo-inosose + NADPH + H(+). The catalysed reaction is 2-deoxy-scyllo-inosamine + NAD(+) = 3-amino-2,3-dideoxy-scyllo-inosose + NADH + H(+). It functions in the pathway metabolic intermediate biosynthesis; 2-deoxystreptamine biosynthesis; 2-deoxystreptamine from D-glucose 6-phosphate: step 3/4. Its pathway is antibiotic biosynthesis; paromomycin biosynthesis. Its function is as follows. Catalyzes the oxidation of 2-deoxy-scyllo-inosamine (DOIA) with NAD(+) or NADP(+), forming 3-amino-2,3-dideoxy-scyllo-inosose (amino-DOI). The polypeptide is 2-deoxy-scyllo-inosamine dehydrogenase (parE) (Streptomyces paromomycinus (Streptomyces rimosus subsp. paromomycinus)).